The following is a 466-amino-acid chain: Uronate isomerase (466 aa).

It belongs to the metallo-dependent hydrolases superfamily. Uronate isomerase family.

It catalyses the reaction D-glucuronate = D-fructuronate. The catalysed reaction is aldehydo-D-galacturonate = keto-D-tagaturonate. The protein operates within carbohydrate metabolism; pentose and glucuronate interconversion. The sequence is that of Uronate isomerase from Streptococcus pneumoniae (strain 70585).